A 242-amino-acid chain; its full sequence is Lectin-like protein At1g53060 (242 aa).

The segment at 3-237 (FHGDAEYASE…RHEILDWSFE (235 aa)) is legume-lectin like. S207 is subject to Phosphoserine.

The protein belongs to the leguminous lectin family.

The chain is Lectin-like protein At1g53060 from Arabidopsis thaliana (Mouse-ear cress).